The sequence spans 449 residues: Hyaluronidase-1 (449 aa).

The signal sequence occupies residues 1-23 (MYHIWIKFLAAWIFLKRFNGVHV). 2 disulfides stabilise this stretch: Cys-47-Cys-340 and Cys-211-Cys-227. N-linked (GlcNAc...) asparagine glycans are attached at residues Asn-67, Asn-103, and Asn-111. The Proton donor role is filled by Glu-135. Asn-153 is a glycosylation site (N-linked (GlcNAc...) asparagine). A glycan (N-linked (GlcNAc...) asparagine) is linked at Asn-357. Cystine bridges form between Cys-365–Cys-376, Cys-370–Cys-427, and Cys-429–Cys-438. N-linked (GlcNAc...) asparagine glycosylation is present at Asn-401. One can recognise an EGF-like domain in the interval 427-438 (CQCYQGWKGLYC).

Belongs to the glycosyl hydrolase 56 family. In terms of assembly, monomer. Expressed by the venom gland.

It is found in the secreted. It carries out the reaction Random hydrolysis of (1-&gt;4)-linkages between N-acetyl-beta-D-glucosamine and D-glucuronate residues in hyaluronate.. Functionally, snake venom endo-hyaluronidase that degrades hyaluronan to smaller oligosaccharide fragments. In venom, it is not toxic by itself, but increases the diffusion of other venom proteins by degrading the extracellular matrix. In addition, it displays antiedematogenic activity. In Cerastes cerastes (Horned desert viper), this protein is Hyaluronidase-1.